The primary structure comprises 177 residues: ATP synthase subunit delta (177 aa).

Belongs to the ATPase delta chain family. F-type ATPases have 2 components, F(1) - the catalytic core - and F(0) - the membrane proton channel. F(1) has five subunits: alpha(3), beta(3), gamma(1), delta(1), epsilon(1). F(0) has three main subunits: a(1), b(2) and c(10-14). The alpha and beta chains form an alternating ring which encloses part of the gamma chain. F(1) is attached to F(0) by a central stalk formed by the gamma and epsilon chains, while a peripheral stalk is formed by the delta and b chains.

It localises to the cell inner membrane. Functionally, f(1)F(0) ATP synthase produces ATP from ADP in the presence of a proton or sodium gradient. F-type ATPases consist of two structural domains, F(1) containing the extramembraneous catalytic core and F(0) containing the membrane proton channel, linked together by a central stalk and a peripheral stalk. During catalysis, ATP synthesis in the catalytic domain of F(1) is coupled via a rotary mechanism of the central stalk subunits to proton translocation. This protein is part of the stalk that links CF(0) to CF(1). It either transmits conformational changes from CF(0) to CF(1) or is implicated in proton conduction. The sequence is that of ATP synthase subunit delta from Shewanella loihica (strain ATCC BAA-1088 / PV-4).